The primary structure comprises 341 residues: Probable cytosolic iron-sulfur protein assembly protein Ciao1 (341 aa).

WD repeat units follow at residues 12 to 51, 58 to 97, 102 to 141, 151 to 190, 197 to 236, 255 to 294, and 305 to 341; these read GHAGRVWSAAWHPGGKLFASCGEDKTIRVWNKSDTDRWVA, GHTRTIRELAWSCCGHYLASASFDTTVAVWDKKSGEFECN, GHDNEVKSVTWSRSGNLLATCSRDKSVWIWEIHHAPDQED, GHTQDVKKVCWHPQEDLLASASYDNTIRMYRQDLADSEWE, SHSSTVWSISFDATGQRLASCSEDTTVKVWQQYGPDNALG, YHSRSVYDIDWCKQTGLLATACGDDTVRIFREASDSDRNE, and AHSQDANKVAWHPTVPGLLLTASDDGEIKLWQYVDAD.

The protein belongs to the WD repeat CIA1 family.

Functionally, essential component of the cytosolic iron-sulfur (Fe/S) protein assembly machinery. Required for the maturation of extramitochondrial Fe/S proteins. The protein is Probable cytosolic iron-sulfur protein assembly protein Ciao1 of Anopheles gambiae (African malaria mosquito).